The chain runs to 191 residues: Large ribosomal subunit protein uL5 (191 aa).

Belongs to the universal ribosomal protein uL5 family. Part of the 50S ribosomal subunit; part of the 5S rRNA/L5/L18/L25 subcomplex. Contacts the 5S rRNA and the P site tRNA. Forms a bridge to the 30S subunit in the 70S ribosome.

This is one of the proteins that bind and probably mediate the attachment of the 5S RNA into the large ribosomal subunit, where it forms part of the central protuberance. In the 70S ribosome it contacts protein S13 of the 30S subunit (bridge B1b), connecting the 2 subunits; this bridge is implicated in subunit movement. Contacts the P site tRNA; the 5S rRNA and some of its associated proteins might help stabilize positioning of ribosome-bound tRNAs. The polypeptide is Large ribosomal subunit protein uL5 (Micrococcus luteus (Micrococcus lysodeikticus)).